The primary structure comprises 298 residues: UDP-N-acetylenolpyruvoylglucosamine reductase (298 aa).

In terms of domain architecture, FAD-binding PCMH-type spans 26–190; that stretch reads RAGGPAERLY…VAAVLDLEPG (165 aa). Residue R170 is part of the active site. S219 serves as the catalytic Proton donor. E289 is an active-site residue.

Belongs to the MurB family. Requires FAD as cofactor.

It localises to the cytoplasm. The catalysed reaction is UDP-N-acetyl-alpha-D-muramate + NADP(+) = UDP-N-acetyl-3-O-(1-carboxyvinyl)-alpha-D-glucosamine + NADPH + H(+). The protein operates within cell wall biogenesis; peptidoglycan biosynthesis. Functionally, cell wall formation. The sequence is that of UDP-N-acetylenolpyruvoylglucosamine reductase from Alkalilimnicola ehrlichii (strain ATCC BAA-1101 / DSM 17681 / MLHE-1).